The sequence spans 284 residues: L-ribulose-5-phosphate 3-epimerase UlaE (284 aa).

Belongs to the L-ribulose-5-phosphate 3-epimerase family.

It carries out the reaction L-ribulose 5-phosphate = L-xylulose 5-phosphate. It participates in cofactor degradation; L-ascorbate degradation; D-xylulose 5-phosphate from L-ascorbate: step 3/4. In terms of biological role, catalyzes the isomerization of L-xylulose-5-phosphate to L-ribulose-5-phosphate. Is involved in the anaerobic L-ascorbate utilization. This chain is L-ribulose-5-phosphate 3-epimerase UlaE, found in Escherichia coli (strain SMS-3-5 / SECEC).